We begin with the raw amino-acid sequence, 323 residues long: UDP-galactose/UDP-glucose transporter 7 (323 aa).

The Cytoplasmic portion of the chain corresponds to 1–10; it reads MEVQAEMEPT. The chain crosses the membrane as a helical span at residues 11 to 31; sequence SSISLVAAVSYGIASMAMVFI. Over 32–35 the chain is Lumenal; sequence NKAV. Residues 36-58 form a helical membrane-spanning segment; the sequence is IMQYPHSMTVLTLQQLATSLLIH. Residues 59 to 78 lie on the Cytoplasmic side of the membrane; it reads FGRRMGYTRAKGIDMATAKK. Residues 79–97 traverse the membrane as a helical segment; the sequence is LLPVSIFYNANVAFALASL. The Lumenal segment spans residues 98–101; it reads KGVN. A helical transmembrane segment spans residues 102–124; sequence IPMYIAIKRLTPLAVLISGVLFG. The Cytoplasmic portion of the chain corresponds to 125 to 132; it reads KGKPTTQV. The chain crosses the membrane as a helical span at residues 133–153; the sequence is ALSVLLTAAGCVIAALGDFSF. Residue D154 is a topological domain, lumenal. The chain crosses the membrane as a helical span at residues 155–175; the sequence is LFGYGLALTSVFFQTMYLVLV. The Cytoplasmic segment spans residues 176–186; the sequence is EKSGAEDGLSS. A helical membrane pass occupies residues 187–207; sequence IEIMFYNSFLSLPFLSILIIV. At 208–226 the chain is on the lumenal side; it reads TGEFPNSLSLLLAKCSYLP. A helical transmembrane segment spans residues 227-247; sequence FLVILILSLVMGIVLNFTMFL. The Cytoplasmic portion of the chain corresponds to 248–252; it reads CTIVN. Residues 253 to 275 form a helical membrane-spanning segment; the sequence is SALTTTIVGVLKGVGSTTLGFVL. Over 276 to 278 the chain is Lumenal; it reads LGG. Residues 279–301 form a helical membrane-spanning segment; it reads VEVHALNVSGLVVNTAGGVWYSY. The Cytoplasmic segment spans residues 302 to 323; it reads AKYRQKKAKPAKLMSDLEAHKK.

Belongs to the TPT transporter family. UGnT (TC 2.A.7.15) subfamily. Widely expressed with highest expression in roots.

It is found in the golgi apparatus membrane. Its function is as follows. Nucleotide-sugar transporter that transports UDP-glucose and UDP-galactose. Plays a role in lateral root and root hair development. The polypeptide is UDP-galactose/UDP-glucose transporter 7 (Arabidopsis thaliana (Mouse-ear cress)).